A 381-amino-acid polypeptide reads, in one-letter code: Probable peptidoglycan glycosyltransferase FtsW (381 aa).

The Cytoplasmic portion of the chain corresponds to 1 to 15; sequence MNNKKKIVKIFFYDK. A helical membrane pass occupies residues 16-36; the sequence is ILFFLLISLSIIGIIIVSSAS. Topologically, residues 37–53 are periplasmic; sequence ISFGIRLHNDYFYFAKR. A helical transmembrane segment spans residues 54–74; it reads NLLYFFLSFFLFFQIIRIPIN. Topologically, residues 75-81 are cytoplasmic; it reads QLEKYNK. The helical transmembrane segment at 82-102 threads the bilayer; it reads IALLINLFLLIIVFIIGNSIN. Residues 103–109 are Periplasmic-facing; the sequence is GAIRWIK. The helical transmembrane segment at 110-130 threads the bilayer; it reads IGFFSIQPSECSKLILFFYIS. Residues 131–143 are Cytoplasmic-facing; the sequence is DYIVKKNKELKNK. A helical transmembrane segment spans residues 144–164; sequence LWGFLKPIIIMLIFVILLLMQ. Over 165 to 166 the chain is Periplasmic; sequence PD. 2 consecutive transmembrane segments (helical) span residues 167–187 and 188–208; these read LGNS…AGIN and LWKC…LIIF. Residues 209–278 lie on the Periplasmic side of the membrane; that stretch reads KPYRIRRILS…FSILGEELGY (70 aa). Residues 279-299 form a helical membrane-spanning segment; it reads IGSIIILIMLFFVIFRIFLIG. At 300–317 the chain is on the cytoplasmic side; sequence KNSFIQKKFFSGYFSFSV. The helical transmembrane segment at 318-338 threads the bilayer; that stretch reads GIWISLQTIMNVGGVIGILPI. Topologically, residues 339–343 are periplasmic; that stretch reads KGLTL. The helical transmembrane segment at 344–364 threads the bilayer; it reads PFISYGGSSLITIFSAIAIVI. The Cytoplasmic segment spans residues 365 to 381; the sequence is RSDFELRINKYQAYLKQ.

It belongs to the SEDS family. FtsW subfamily.

The protein localises to the cell inner membrane. It carries out the reaction [GlcNAc-(1-&gt;4)-Mur2Ac(oyl-L-Ala-gamma-D-Glu-L-Lys-D-Ala-D-Ala)](n)-di-trans,octa-cis-undecaprenyl diphosphate + beta-D-GlcNAc-(1-&gt;4)-Mur2Ac(oyl-L-Ala-gamma-D-Glu-L-Lys-D-Ala-D-Ala)-di-trans,octa-cis-undecaprenyl diphosphate = [GlcNAc-(1-&gt;4)-Mur2Ac(oyl-L-Ala-gamma-D-Glu-L-Lys-D-Ala-D-Ala)](n+1)-di-trans,octa-cis-undecaprenyl diphosphate + di-trans,octa-cis-undecaprenyl diphosphate + H(+). The protein operates within cell wall biogenesis; peptidoglycan biosynthesis. Its function is as follows. Peptidoglycan polymerase that is essential for cell division. The chain is Probable peptidoglycan glycosyltransferase FtsW from Wigglesworthia glossinidia brevipalpis.